The sequence spans 457 residues: Argininosuccinate lyase (457 aa).

The protein belongs to the lyase 1 family. Argininosuccinate lyase subfamily.

It is found in the cytoplasm. The enzyme catalyses 2-(N(omega)-L-arginino)succinate = fumarate + L-arginine. It functions in the pathway amino-acid biosynthesis; L-arginine biosynthesis; L-arginine from L-ornithine and carbamoyl phosphate: step 3/3. The polypeptide is Argininosuccinate lyase (Shewanella sediminis (strain HAW-EB3)).